Reading from the N-terminus, the 345-residue chain is Dihydroorotase (345 aa).

Zn(2+)-binding residues include His-13 and His-15. Substrate is bound by residues His-15–Arg-17 and Asn-41. The Zn(2+) site is built by Lys-99, His-136, and His-174. N6-carboxylysine is present on Lys-99. His-136 is a binding site for substrate. Residue Leu-219 participates in substrate binding. A Zn(2+)-binding site is contributed by Asp-247. Asp-247 is an active-site residue. Residues His-251 and Ala-263 each coordinate substrate.

This sequence belongs to the metallo-dependent hydrolases superfamily. DHOase family. Class II DHOase subfamily. Homodimer. Requires Zn(2+) as cofactor.

The catalysed reaction is (S)-dihydroorotate + H2O = N-carbamoyl-L-aspartate + H(+). Its pathway is pyrimidine metabolism; UMP biosynthesis via de novo pathway; (S)-dihydroorotate from bicarbonate: step 3/3. Functionally, catalyzes the reversible cyclization of carbamoyl aspartate to dihydroorotate. In Agrobacterium fabrum (strain C58 / ATCC 33970) (Agrobacterium tumefaciens (strain C58)), this protein is Dihydroorotase.